The chain runs to 189 residues: Probable chorismate pyruvate-lyase (189 aa).

Residues R77, L115, and E174 each coordinate substrate.

The protein belongs to the UbiC family.

It is found in the cytoplasm. The catalysed reaction is chorismate = 4-hydroxybenzoate + pyruvate. It functions in the pathway cofactor biosynthesis; ubiquinone biosynthesis. In terms of biological role, removes the pyruvyl group from chorismate, with concomitant aromatization of the ring, to provide 4-hydroxybenzoate (4HB) for the ubiquinone pathway. The protein is Probable chorismate pyruvate-lyase of Shewanella sp. (strain MR-7).